The following is a 376-amino-acid chain: DNA-directed RNA polymerase subunit alpha (376 aa).

Residues 1–259 (MSDCSQNLLY…KHFSIFEKMD (259 aa)) are alpha N-terminal domain (alpha-NTD). The segment at 276-376 (KDDILHKLVL…DKIRSKNGKG (101 aa)) is alpha C-terminal domain (alpha-CTD).

It belongs to the RNA polymerase alpha chain family. As to quaternary structure, homodimer. The RNAP catalytic core consists of 2 alpha, 1 beta, 1 beta' and 1 omega subunit. When a sigma factor is associated with the core the holoenzyme is formed, which can initiate transcription.

It carries out the reaction RNA(n) + a ribonucleoside 5'-triphosphate = RNA(n+1) + diphosphate. Functionally, DNA-dependent RNA polymerase catalyzes the transcription of DNA into RNA using the four ribonucleoside triphosphates as substrates. In Chlamydia abortus (strain DSM 27085 / S26/3) (Chlamydophila abortus), this protein is DNA-directed RNA polymerase subunit alpha.